Here is a 341-residue protein sequence, read N- to C-terminus: Serpentine receptor class epsilon-8 (341 aa).

7 helical membrane passes run 37 to 57 (VGFLVFSWIEFLYLFYLFIFI), 64 to 86 (LTFLFMNYGGQYFCSMLSRCIIV), 101 to 123 (WILVANFARTVCLFIAMYILPIF), 143 to 163 (IWVSLMILSIFHPLVFASAIA), 169 to 189 (IPVVVHVISFFIVNIIGYIGI), 235 to 255 (VQISILFFNIGCCSILLMDHF), and 264 to 284 (WSYVCFNFFALVYGITVPIIL).

Belongs to the nematode receptor-like protein sre family.

Its subcellular location is the membrane. The chain is Serpentine receptor class epsilon-8 (sre-8) from Caenorhabditis elegans.